The following is a 443-amino-acid chain: Zinc finger CCCH domain-containing protein 63 (443 aa).

2 disordered regions span residues 1–29 (MDFD…MAPT) and 56–99 (LPGP…SSSW). 2 C3H1-type zinc fingers span residues 30 to 56 (DTRQ…HREL) and 109 to 136 (TKTE…HCWS). 6 WD repeats span residues 149-190 (GHEK…GVLK), 228-265 (GPVG…NCFE), 272-311 (GHTL…QTLT), 313-349 (HSSV…NLEV), 354-396 (KEEH…LFIR), and 404-442 (FAKQ…TAAL).

This is Zinc finger CCCH domain-containing protein 63 (ZFWD2) from Arabidopsis thaliana (Mouse-ear cress).